Reading from the N-terminus, the 768-residue chain is DNA replication licensing factor MCM3 homolog 2 (768 aa).

The region spanning T290–A497 is the MCM domain. G340 to S347 is a binding site for ATP. Residues S472–D475 carry the Arginine finger motif. Residues E661 to A670 show a composition bias toward basic and acidic residues. The segment at E661 to D689 is disordered. Over residues A672 to S682 the composition is skewed to gly residues.

It belongs to the MCM family.

The protein resides in the nucleus. It catalyses the reaction ATP + H2O = ADP + phosphate + H(+). In terms of biological role, acts as a factor that allows the DNA to undergo a single round of replication per cell cycle. Required for DNA replication and cell proliferation. May act as a component of the MCM complex which is the putative replicative helicase of the replication licensing system in eukaryotic cells. The polypeptide is DNA replication licensing factor MCM3 homolog 2 (ROA2) (Zea mays (Maize)).